Here is a 660-residue protein sequence, read N- to C-terminus: DNA mismatch repair protein MutL (660 aa).

It belongs to the DNA mismatch repair MutL/HexB family.

Its function is as follows. This protein is involved in the repair of mismatches in DNA. It is required for dam-dependent methyl-directed DNA mismatch repair. May act as a 'molecular matchmaker', a protein that promotes the formation of a stable complex between two or more DNA-binding proteins in an ATP-dependent manner without itself being part of a final effector complex. The polypeptide is DNA mismatch repair protein MutL (Streptococcus equi subsp. zooepidemicus (strain H70)).